The following is a 185-amino-acid chain: Large ribosomal subunit protein uL5 (185 aa).

It belongs to the universal ribosomal protein uL5 family. In terms of assembly, part of the 50S ribosomal subunit; part of the 5S rRNA/L5/L18/L25 subcomplex. Contacts the 5S rRNA and the P site tRNA. Forms a bridge to the 30S subunit in the 70S ribosome.

Functionally, this is one of the proteins that bind and probably mediate the attachment of the 5S RNA into the large ribosomal subunit, where it forms part of the central protuberance. In the 70S ribosome it contacts protein S13 of the 30S subunit (bridge B1b), connecting the 2 subunits; this bridge is implicated in subunit movement. Contacts the P site tRNA; the 5S rRNA and some of its associated proteins might help stabilize positioning of ribosome-bound tRNAs. In Caulobacter vibrioides (strain NA1000 / CB15N) (Caulobacter crescentus), this protein is Large ribosomal subunit protein uL5.